An 80-amino-acid polypeptide reads, in one-letter code: Exodeoxyribonuclease 7 small subunit (80 aa).

Belongs to the XseB family. As to quaternary structure, heterooligomer composed of large and small subunits.

It is found in the cytoplasm. It carries out the reaction Exonucleolytic cleavage in either 5'- to 3'- or 3'- to 5'-direction to yield nucleoside 5'-phosphates.. Functionally, bidirectionally degrades single-stranded DNA into large acid-insoluble oligonucleotides, which are then degraded further into small acid-soluble oligonucleotides. In Vibrio parahaemolyticus serotype O3:K6 (strain RIMD 2210633), this protein is Exodeoxyribonuclease 7 small subunit.